A 478-amino-acid polypeptide reads, in one-letter code: Protein FAM83E (478 aa).

Residues 1 to 293 (MAASQLAALE…LYAASCPLPP (293 aa)) form a DUF1669 region. Disordered regions lie at residues 292–334 (PPAP…PLAH), 359–436 (RART…LPPA), and 452–478 (DATF…GGQP). The segment covering 309 to 319 (RSPHRVSRRRS) has biased composition (basic residues). Residues 379-388 (RLSQLSGSSD) are compositionally biased toward polar residues.

This sequence belongs to the FAM83 family. As to quaternary structure, directly interacts (via DUF1669) with CSNK1A1, CSNK1A1L, CSNK1D and CSNK1E. May interact with RAF1.

It localises to the cytoplasm. The protein resides in the perinuclear region. In terms of biological role, may play a role in MAPK signaling. This Homo sapiens (Human) protein is Protein FAM83E.